A 371-amino-acid chain; its full sequence is Opsin Rh1 (371 aa).

At Met-1 to Trp-47 the chain is on the extracellular side. An N-linked (GlcNAc...) asparagine glycan is attached at Asn-18. The helical transmembrane segment at Ala-48–Ile-72 threads the bilayer. Topologically, residues Phe-73–Asn-84 are cytoplasmic. Residues Leu-85–Phe-110 traverse the membrane as a helical segment. Residues Tyr-111–Tyr-124 lie on the Extracellular side of the membrane. A disulfide bond links Cys-121 and Cys-198. A helical membrane pass occupies residues Gly-125–Leu-144. The Cytoplasmic portion of the chain corresponds to Asp-145–Leu-163. Residues Ala-164 to Ser-187 traverse the membrane as a helical segment. Residues Arg-188–Ser-211 lie on the Extracellular side of the membrane. A helical transmembrane segment spans residues Tyr-212–Val-239. Topologically, residues Ser-240–Lys-274 are cytoplasmic. Residues Val-275 to Leu-298 form a helical membrane-spanning segment. At Phe-299–Thr-305 the chain is on the extracellular side. Residues Pro-306–Ser-330 traverse the membrane as a helical segment. Lys-317 bears the N6-(retinylidene)lysine mark. Residues His-331–Ala-371 are Cytoplasmic-facing.

The protein belongs to the G-protein coupled receptor 1 family. Opsin subfamily. Phosphorylated on some or all of the serine and threonine residues present in the C-terminal region.

It is found in the cell projection. It localises to the rhabdomere membrane. Its function is as follows. Visual pigments are the light-absorbing molecules that mediate vision. They consist of an apoprotein, opsin, covalently linked to cis-retinal. This is Opsin Rh1 (NINAE) from Calliphora vicina (Blue blowfly).